The following is a 431-amino-acid chain: 23S rRNA (uracil(1939)-C(5))-methyltransferase RlmD (431 aa).

Residues 8-68 form the TRAM domain; that stretch reads KRRVTTRQII…SKYSRGQVKR (61 aa). Residues Cys-81, Cys-87, Cys-90, and Cys-162 each contribute to the [4Fe-4S] cluster site. The S-adenosyl-L-methionine site is built by Gln-265, Phe-294, Asn-299, Glu-315, Asn-342, and Asp-363. Cys-389 serves as the catalytic Nucleophile.

The protein belongs to the class I-like SAM-binding methyltransferase superfamily. RNA M5U methyltransferase family. RlmD subfamily.

The catalysed reaction is uridine(1939) in 23S rRNA + S-adenosyl-L-methionine = 5-methyluridine(1939) in 23S rRNA + S-adenosyl-L-homocysteine + H(+). Catalyzes the formation of 5-methyl-uridine at position 1939 (m5U1939) in 23S rRNA. The sequence is that of 23S rRNA (uracil(1939)-C(5))-methyltransferase RlmD from Enterobacter sp. (strain 638).